Reading from the N-terminus, the 598-residue chain is F-box/WD repeat-containing protein 8 (598 aa).

Met-1 bears the N-acetylmethionine mark. The disordered stretch occupies residues 17-93 (LAQAQAPKKR…RSPLAREGAG (77 aa)). Positions 29 to 40 (PEAAERRARRPE) are enriched in basic and acidic residues. Positions 61–71 (EGAGRPPAARA) are enriched in low complexity. Phosphoserine is present on residues Ser-83 and Ser-85. The F-box domain occupies 113–159 (PFFDIQLPYELAINIFQYLDRKELGRCAQVSKTWKVIAEDEVLWYRL). 8 WD repeats span residues 201 to 250 (AVSE…LESE), 259 to 299 (QPNV…FEHD), 300 to 340 (ARIQ…AEFE), 341 to 383 (VPKL…LLYA), 384 to 429 (HGPP…LKLG), 430 to 475 (NVLR…SAHQ), 476 to 513 (LRVS…EVYS), and 514 to 561 (GHPV…AYEF).

Component of the Cul7-RING(FBXW8) complex consisting of CUL7, RBX1, SKP1 and FBXW8; within the complex interacts with CUL7 and SKP1. Interacts with GLMN isoform 1. Interacts with OBSL1, CUL1, CUL2, CCT6B, PFDN5, CCT2, CCT3, CCT6A, CCT7, VBP1, CCDC8, ARF1, TRIP13, PDCD5 and GORASP1. Interacts with MAP4K1/HPK1 (when autophosphorylated). Associated component of the 3M complex. Interacts with POUF51 (when phosphorylated on 'Ser-355'). In terms of processing, phosphorylation at Ser-85 by mTORC2 promotes FBXW8 stabilization, allowing its translocation to the cytosol in response to insulin.

It is found in the cytoplasm. The protein localises to the perinuclear region. Its subcellular location is the golgi apparatus. It functions in the pathway protein modification; protein ubiquitination. Functionally, substrate-recognition component of the Cul7-RING(FBXW8) ubiquitin ligase complex, which mediates the ubiquitination and subsequent proteasomal degradation of target proteins. The Cul7-RING(FBXW8) complex mediates ubiquitination and consequent degradation of GORASP1, acting as a component of the ubiquitin ligase pathway that regulates Golgi morphogenesis and dendrite patterning in brain. Mediates ubiquitination and degradation of IRS1 in a mTOR-dependent manner: the Cul7-RING(FBXW8) complex recognizes and binds IRS1 previously phosphorylated by S6 kinase (RPS6KB1 or RPS6KB2). The Cul7-RING(FBXW8) complex also mediates ubiquitination of MAP4K1/HPK1: recognizes and binds autophosphorylated MAP4K1/HPK1, leading to its degradation, thereby affecting cell proliferation and differentiation. The Cul7-RING(FBXW8) complex also mediates ubiquitination of phosphorylated cyclin-D1 (CCND1). The Cul7-RING(FBXW8) complex is however not a major regulator of CCND1 stability during the G1/S transition. Associated component of the 3M complex, suggesting that it mediates some of 3M complex functions. This chain is F-box/WD repeat-containing protein 8, found in Homo sapiens (Human).